The sequence spans 692 residues: Meiotic sister-chromatid recombination protein 6, mitochondrial (692 aa).

The transit peptide at 1–30 (MLSHNALRAFDCSKVIISRRCLTSSTSIYQ) directs the protein to the mitochondrion.

The protein localises to the mitochondrion. Functionally, may be involved in the control of meiotic sister-chromatid recombination. The protein is Meiotic sister-chromatid recombination protein 6, mitochondrial (MSC6) of Saccharomyces cerevisiae (strain ATCC 204508 / S288c) (Baker's yeast).